The sequence spans 376 residues: tRNA pseudouridine synthase C (376 aa).

Aspartate 168 is a catalytic residue.

It in the C-terminal section; belongs to the pseudouridine synthase RluA family. To E.coli YqcC in the N-terminal section.

The catalysed reaction is uridine(65) in tRNA = pseudouridine(65) in tRNA. In terms of biological role, responsible for synthesis of pseudouridine from uracil-65 in transfer RNAs. The protein is tRNA pseudouridine synthase C (truC) of Pectobacterium carotovorum subsp. carotovorum (Erwinia carotovora subsp. carotovora).